Consider the following 58-residue polypeptide: UPF0391 membrane protein MADE_1011595 (58 aa).

The next 2 membrane-spanning stretches (helical) occupy residues 4–24 (WAIT…GGIA) and 27–47 (ATGI…ISLI).

Belongs to the UPF0391 family.

It is found in the cell membrane. In Alteromonas mediterranea (strain DSM 17117 / CIP 110805 / LMG 28347 / Deep ecotype), this protein is UPF0391 membrane protein MADE_1011595.